The chain runs to 302 residues: Sulfate adenylyltransferase subunit 2 (302 aa).

Residues 280-302 form a disordered region; it reads RQGRAIDHDQSGSMELKKRQGYF.

This sequence belongs to the PAPS reductase family. CysD subfamily. As to quaternary structure, heterodimer composed of CysD, the smaller subunit, and CysN.

It carries out the reaction sulfate + ATP + H(+) = adenosine 5'-phosphosulfate + diphosphate. It participates in sulfur metabolism; hydrogen sulfide biosynthesis; sulfite from sulfate: step 1/3. With CysN forms the ATP sulfurylase (ATPS) that catalyzes the adenylation of sulfate producing adenosine 5'-phosphosulfate (APS) and diphosphate, the first enzymatic step in sulfur assimilation pathway. APS synthesis involves the formation of a high-energy phosphoric-sulfuric acid anhydride bond driven by GTP hydrolysis by CysN coupled to ATP hydrolysis by CysD. The sequence is that of Sulfate adenylyltransferase subunit 2 from Vibrio cholerae serotype O1 (strain ATCC 39541 / Classical Ogawa 395 / O395).